The chain runs to 280 residues: MIQFVIPSYQHVGAVSALDMFPTDYEPHIVVREHEEKAYYDAYGSRAKIITIPDDVNGIAGTRKAITDMYAGQRIWMIDDDTTIRMSSMRKRDDRRCVDKVNQLTREQFYELIQYVEDAMDCGYYHGHARLPIFKITSSWGNYRENSYGFTNTWYDLGKLTTEQIGYGKIDLCEDMYAFLNLINQGYPHLALFKYLVVSGKAQAPGGCSSIRSNSKHNRALEQINREFPEQARWKTSNIEKRKSLGEEDESLKVLRMCVSRKEKSEAFHKFNAIHPIAVD.

It participates in genetic information processing; DNA modification. Functionally, transfers a gentiobiosyl-group on a hydroxymethylcytosine residue in DNA. Is involved in a DNA modification process to protects the phage genome against its own nucleases and the host restriction endonuclease system. The polypeptide is Beta-glucosyl-HMC-alpha-glucosyl-transferase (Enterobacteria phage T2 (Bacteriophage T2)).